We begin with the raw amino-acid sequence, 182 residues long: CDP-diacylglycerol--glycerol-3-phosphate 3-phosphatidyltransferase (182 aa).

The Cytoplasmic segment spans residues 1–12 (MQLNIPTWLTLF). The helical transmembrane segment at 13–37 (RVVLIPFFVLAFYLPFVWAPMVCAI) threads the bilayer. Residues 38 to 60 (IFVFAAATDWFDGFLARRWKQTT) lie on the Periplasmic side of the membrane. The chain crosses the membrane as a helical span at residues 61 to 81 (RFGAFLDPVADKVMVAIALVL). Residues 82–86 (VAEHY) are Cytoplasmic-facing. Residues 87–107 (HVWWITLPAATMIAREIIISS) traverse the membrane as a helical segment. Over 108 to 145 (LREWMAEIGKRSSVAVSWIGKVKTTAQMGSLVGLLWRP) the chain is Periplasmic. A helical membrane pass occupies residues 146–168 (DHNIELASFVLLYIAAVLTFWSM). Topologically, residues 169-181 (FQYLNAAWKDLLE) are cytoplasmic.

It belongs to the CDP-alcohol phosphatidyltransferase class-I family.

The protein resides in the cell inner membrane. It carries out the reaction a CDP-1,2-diacyl-sn-glycerol + sn-glycerol 3-phosphate = a 1,2-diacyl-sn-glycero-3-phospho-(1'-sn-glycero-3'-phosphate) + CMP + H(+). It participates in phospholipid metabolism; phosphatidylglycerol biosynthesis; phosphatidylglycerol from CDP-diacylglycerol: step 1/2. Its function is as follows. Catalyzes the conversion of cytidine diphosphate diacylglycerol (CDP-DG) and glycerol 3-phosphate into phosphatidylglycerol. Essential for the synthesis of anionic phospholipids, thereby playing a role in balancing the ratio of zwitterionic and anionic phospholipids, which is thought to be important for normal membrane function. The protein is CDP-diacylglycerol--glycerol-3-phosphate 3-phosphatidyltransferase of Yersinia enterocolitica serotype O:8 / biotype 1B (strain NCTC 13174 / 8081).